Here is a 1241-residue protein sequence, read N- to C-terminus: DNA-directed RNA polymerase subunit beta (1241 aa).

It belongs to the RNA polymerase beta chain family. The RNAP catalytic core consists of 2 alpha, 1 beta, 1 beta' and 1 omega subunit. When a sigma factor is associated with the core the holoenzyme is formed, which can initiate transcription.

The catalysed reaction is RNA(n) + a ribonucleoside 5'-triphosphate = RNA(n+1) + diphosphate. DNA-dependent RNA polymerase catalyzes the transcription of DNA into RNA using the four ribonucleoside triphosphates as substrates. The sequence is that of DNA-directed RNA polymerase subunit beta from Clostridium botulinum (strain Alaska E43 / Type E3).